The primary structure comprises 316 residues: Homoserine kinase (316 aa).

97–107 (PPARGLGSSAS) is a binding site for ATP.

Belongs to the GHMP kinase family. Homoserine kinase subfamily.

The protein localises to the cytoplasm. The enzyme catalyses L-homoserine + ATP = O-phospho-L-homoserine + ADP + H(+). It functions in the pathway amino-acid biosynthesis; L-threonine biosynthesis; L-threonine from L-aspartate: step 4/5. In terms of biological role, catalyzes the ATP-dependent phosphorylation of L-homoserine to L-homoserine phosphate. In Prochlorococcus marinus (strain MIT 9303), this protein is Homoserine kinase.